Reading from the N-terminus, the 1297-residue chain is Phosphoribosylformylglycinamidine synthase (1297 aa).

Residues 307 to 318 and A678 contribute to the ATP site; that span reads GASTGSGGEIRD. Positions 718, 722, and 886 each coordinate Mg(2+). The 254-residue stretch at 1044–1297 folds into the Glutamine amidotransferase type-1 domain; the sequence is MAILREQGVN…MFQNARKNLA (254 aa). C1137 serves as the catalytic Nucleophile. Active-site residues include H1262 and E1264.

This sequence in the N-terminal section; belongs to the FGAMS family. As to quaternary structure, monomer.

It localises to the cytoplasm. It catalyses the reaction N(2)-formyl-N(1)-(5-phospho-beta-D-ribosyl)glycinamide + L-glutamine + ATP + H2O = 2-formamido-N(1)-(5-O-phospho-beta-D-ribosyl)acetamidine + L-glutamate + ADP + phosphate + H(+). Its pathway is purine metabolism; IMP biosynthesis via de novo pathway; 5-amino-1-(5-phospho-D-ribosyl)imidazole from N(2)-formyl-N(1)-(5-phospho-D-ribosyl)glycinamide: step 1/2. Its function is as follows. Phosphoribosylformylglycinamidine synthase involved in the purines biosynthetic pathway. Catalyzes the ATP-dependent conversion of formylglycinamide ribonucleotide (FGAR) and glutamine to yield formylglycinamidine ribonucleotide (FGAM) and glutamate. The polypeptide is Phosphoribosylformylglycinamidine synthase (Vibrio vulnificus (strain YJ016)).